We begin with the raw amino-acid sequence, 342 residues long: S-adenosylmethionine:tRNA ribosyltransferase-isomerase (342 aa).

This sequence belongs to the QueA family. In terms of assembly, monomer.

It is found in the cytoplasm. The enzyme catalyses 7-aminomethyl-7-carbaguanosine(34) in tRNA + S-adenosyl-L-methionine = epoxyqueuosine(34) in tRNA + adenine + L-methionine + 2 H(+). The protein operates within tRNA modification; tRNA-queuosine biosynthesis. Transfers and isomerizes the ribose moiety from AdoMet to the 7-aminomethyl group of 7-deazaguanine (preQ1-tRNA) to give epoxyqueuosine (oQ-tRNA). The sequence is that of S-adenosylmethionine:tRNA ribosyltransferase-isomerase from Listeria monocytogenes serovar 1/2a (strain ATCC BAA-679 / EGD-e).